Reading from the N-terminus, the 305-residue chain is NAD kinase (305 aa).

Aspartate 82 serves as the catalytic Proton acceptor. NAD(+) is bound by residues 82–83 (DG), 156–157 (ND), arginine 184, aspartate 186, 197–202 (TAYALS), alanine 221, and glutamine 255.

It belongs to the NAD kinase family. The cofactor is a divalent metal cation.

The protein resides in the cytoplasm. The enzyme catalyses NAD(+) + ATP = ADP + NADP(+) + H(+). Functionally, involved in the regulation of the intracellular balance of NAD and NADP, and is a key enzyme in the biosynthesis of NADP. Catalyzes specifically the phosphorylation on 2'-hydroxyl of the adenosine moiety of NAD to yield NADP. This chain is NAD kinase, found in Cupriavidus pinatubonensis (strain JMP 134 / LMG 1197) (Cupriavidus necator (strain JMP 134)).